The chain runs to 362 residues: Epoxide hydrolase 4 (362 aa).

A helical; Signal-anchor for type II membrane protein membrane pass occupies residues 17–37; sequence SLLFWSLVYCYCGLCASIHLL. In terms of domain architecture, AB hydrolase-1 spans 94–211; it reads PLMLLLHGFP…EYILRHPAQL (118 aa). D169 functions as the Nucleophile in the catalytic mechanism. Y281 (proton donor) is an active-site residue. Catalysis depends on H336, which acts as the Proton acceptor.

It belongs to the AB hydrolase superfamily. Epoxide hydrolase family.

The protein localises to the membrane. The polypeptide is Epoxide hydrolase 4 (EPHX4) (Homo sapiens (Human)).